The primary structure comprises 372 residues: Flap endonuclease 1 (372 aa).

Positions 1–105 (MGVKGLNQLI…GELEKRLLRR (105 aa)) are N-domain. Asp-34 contacts Mg(2+). Positions 47 and 71 each coordinate DNA. Asp-87, Glu-159, Glu-161, Asp-180, and Asp-182 together coordinate Mg(2+). Positions 123 to 254 (EVLKFEKRLV…ATAFKLIKEH (132 aa)) are I-domain. DNA is bound at residue Glu-159. DNA-binding residues include Gly-232 and Asp-234. Asp-234 contributes to the Mg(2+) binding site. Residues 339–347 (VQGRLDGFF) are interaction with PCNA. Residues 353–366 (DDKKRKADPKESKA) show a composition bias toward basic and acidic residues. The segment at 353 to 372 (DDKKRKADPKESKASKKKKK) is disordered.

It belongs to the XPG/RAD2 endonuclease family. FEN1 subfamily. In terms of assembly, interacts with PCNA. Three molecules of RAD27 bind to one PCNA trimer with each molecule binding to one PCNA monomer. PCNA stimulates the nuclease activity without altering cleavage specificity. Requires Mg(2+) as cofactor. Phosphorylated. Phosphorylation upon DNA damage induces relocalization to the nuclear plasma.

The protein resides in the nucleus. Its subcellular location is the nucleolus. It localises to the nucleoplasm. The protein localises to the mitochondrion. Functionally, structure-specific nuclease with 5'-flap endonuclease and 5'-3' exonuclease activities involved in DNA replication and repair. During DNA replication, cleaves the 5'-overhanging flap structure that is generated by displacement synthesis when DNA polymerase encounters the 5'-end of a downstream Okazaki fragment. It enters the flap from the 5'-end and then tracks to cleave the flap base, leaving a nick for ligation. Also involved in the long patch base excision repair (LP-BER) pathway, by cleaving within the apurinic/apyrimidinic (AP) site-terminated flap. Acts as a genome stabilization factor that prevents flaps from equilibrating into structures that lead to duplications and deletions. Also possesses 5'-3' exonuclease activity on nicked or gapped double-stranded DNA, and exhibits RNase H activity. Also involved in replication and repair of rDNA and in repairing mitochondrial DNA. In Candida albicans (strain WO-1) (Yeast), this protein is Flap endonuclease 1.